The sequence spans 470 residues: Light-independent protochlorophyllide reductase subunit N (470 aa).

Cys23, Cys48, and Cys108 together coordinate [4Fe-4S] cluster.

This sequence belongs to the BchN/ChlN family. As to quaternary structure, protochlorophyllide reductase is composed of three subunits; ChlL, ChlN and ChlB. Forms a heterotetramer of two ChlB and two ChlN subunits. [4Fe-4S] cluster serves as cofactor.

It is found in the plastid. Its subcellular location is the chloroplast. It catalyses the reaction chlorophyllide a + oxidized 2[4Fe-4S]-[ferredoxin] + 2 ADP + 2 phosphate = protochlorophyllide a + reduced 2[4Fe-4S]-[ferredoxin] + 2 ATP + 2 H2O. It participates in porphyrin-containing compound metabolism; chlorophyll biosynthesis (light-independent). Component of the dark-operative protochlorophyllide reductase (DPOR) that uses Mg-ATP and reduced ferredoxin to reduce ring D of protochlorophyllide (Pchlide) to form chlorophyllide a (Chlide). This reaction is light-independent. The NB-protein (ChlN-ChlB) is the catalytic component of the complex. The polypeptide is Light-independent protochlorophyllide reductase subunit N (Zygnema circumcarinatum (Green alga)).